The primary structure comprises 548 residues: Glucan 1,4-alpha-maltotetraohydrolase (548 aa).

Positions 1–21 (MSHILRAAVLAAMLLPLPSMA) are cleaved as a signal peptide. Ca(2+) contacts are provided by D22, Q23, H34, D37, and E38. A substrate-binding site is contributed by 99 to 100 (YF). Residue N137 participates in Ca(2+) binding. Residue H138 participates in substrate binding. The cysteines at positions 161 and 171 are disulfide-linked. 2 residues coordinate Ca(2+): D172 and D175. Position 177–181 (177–181 (FIGGD)) interacts with substrate. Residue D183 participates in Ca(2+) binding. R212 lines the substrate pocket. The Nucleophile role is filled by D214. 217-218 (RG) is a substrate binding site. Ca(2+) is bound at residue G218. Residues C237 and C272 are joined by a disulfide bond. The Proton donor role is filled by E240. Positions 314 and 326 each coordinate substrate. Positions 446–548 (GEPGALVSVS…SEGATTVGRL (103 aa)) constitute a CBM20 domain. Residues 529–542 (QGGANNSLTPSEGA) are compositionally biased toward polar residues. Residues 529-548 (QGGANNSLTPSEGATTVGRL) form a disordered region.

It belongs to the glycosyl hydrolase 13 family. As to quaternary structure, monomer. Requires Ca(2+) as cofactor.

Its subcellular location is the secreted. It carries out the reaction Hydrolysis of (1-&gt;4)-alpha-D-glucosidic linkages in amylaceous polysaccharides, to remove successive maltotetraose residues from the non-reducing chain ends.. It participates in glycan degradation; starch degradation. This is Glucan 1,4-alpha-maltotetraohydrolase (amyP) from Stutzerimonas stutzeri (Pseudomonas stutzeri).